Here is a 75-residue protein sequence, read N- to C-terminus: Xibalbin-13 2 (75 aa).

Positions 1–27 are cleaved as a signal peptide; the sequence is MKEANTRRYIYLCLVVVLLSIIITTEA. Residues 28–30 constitute a propeptide that is removed on maturation; that stretch reads EDD. 4 disulfide bridges follow: Cys34-Cys49, Cys41-Cys54, Cys48-Cys65, and Cys56-Cys63.

It belongs to the xibalbin-13 family. As to expression, expressed by the venom gland and the whole body.

It is found in the secreted. Probable neurotoxin. Strongly inhibits voltage-gated potassium channels (Kv1.1/KCNA1, Kv1.2/KCNA2, Kv1.3/KCNA3, and Kv1.6/KCNA6, with the highest toxicity against Kv1.1 (85.1% inhibition at 1 uM)) and mildly inhibits sodium channels (Nav1.2/SCN2A, Nav1.4/SCN4A, Nav1.5/SCN5A, Nav1.6/SCN8A, and BgNav). Induces activation of protein kinase A type II (PKA-II) and MAP kinase Erk1/2 in primary nociceptive and non-nociceptive sensory neurons. Does not show cytotoxic activity. Does not have an impact on Ca2+, cAMP, and NO signaling in the cell types analyzed. Does not interfere with the adhesion of leukocytes to endothelial cells. This Xibalbanus tulumensis (Blind cave remipede) protein is Xibalbin-13 2.